Here is a 148-residue protein sequence, read N- to C-terminus: Gag-Pol polyprotein (148 aa).

Positions 1 to 64 (IPYNPQSQGV…SAGERIIDII (64 aa)) constitute an Integrase catalytic domain. Position 12 (Glu-12) interacts with Mg(2+). Positions 83–130 (FRVYYRDSRDPIWKGPAKLLWKGEGAVVIQDNSDIKVVPRRKVKIIRD) form a DNA-binding region, integrase-type.

In terms of assembly, homotetramer; may further associate as a homohexadecamer. Part of the pre-integration complex (PIC) which is composed of viral genome, matrix protein, Vpr and integrase. Interacts with human SMARCB1/INI1 and human PSIP1/LEDGF isoform 1. Interacts with human KPNA3; this interaction might play a role in nuclear import of the pre-integration complex. Interacts with human NUP153; this interaction might play a role in nuclear import of the pre-integration complex. Post-translationally, specific enzymatic cleavages by the viral protease yield mature proteins.

Catalyzes viral DNA integration into the host chromosome, by performing a series of DNA cutting and joining reactions. This enzyme activity takes place after virion entry into a cell and reverse transcription of the RNA genome in dsDNA. The first step in the integration process is 3' processing. This step requires a complex comprising the viral genome, matrix protein, Vpr and integrase. This complex is called the pre-integration complex (PIC). The integrase protein removes 2 nucleotides from each 3' end of the viral DNA, leaving recessed CA OH's at the 3' ends. In the second step, the PIC enters cell nucleus. This process is mediated through integrase and Vpr proteins, and allows the virus to infect a non dividing cell. This ability to enter the nucleus is specific of lentiviruses, other retroviruses cannot and rely on cell division to access cell chromosomes. In the third step, termed strand transfer, the integrase protein joins the previously processed 3' ends to the 5' ends of strands of target cellular DNA at the site of integration. The 5'-ends are produced by integrase-catalyzed staggered cuts, 5 bp apart. A Y-shaped, gapped, recombination intermediate results, with the 5'-ends of the viral DNA strands and the 3' ends of target DNA strands remaining unjoined, flanking a gap of 5 bp. The last step is viral DNA integration into host chromosome. This involves host DNA repair synthesis in which the 5 bp gaps between the unjoined strands are filled in and then ligated. Since this process occurs at both cuts flanking the HIV genome, a 5 bp duplication of host DNA is produced at the ends of HIV-1 integration. Alternatively, Integrase may catalyze the excision of viral DNA just after strand transfer, this is termed disintegration. The protein is Gag-Pol polyprotein (gag-pol) of Homo sapiens (Human).